We begin with the raw amino-acid sequence, 3317 residues long: Cadherin-23 (3317 aa).

Residues 1-23 (MRHPPVTWCAMLWLLMLVSGSWG) form the signal peptide. Residues 24 to 3062 (QVNRLPFFTN…SVQLPDDMSA (3039 aa)) are Extracellular-facing. Cadherin domains are found at residues 34 to 132 (HFFD…APTF), 133 to 236 (HNQP…DPIF), 237 to 348 (INLP…APEF), 349 to 458 (NSSE…RPIF), 459 to 559 (SQPL…VPTF), 560 to 669 (QKDA…PPTF), 670 to 782 (SKPA…APYY), 777 to 888 (KDAP…DPTF), 889 to 993 (QNLP…TPTF), 994 to 1100 (FPAV…RPIF), 1101 to 1206 (LQSS…APVF), 1208 to 1311 (QQQY…AVQF), 1312 to 1416 (SNAS…SPRF), 1418 to 1525 (FTSD…PPVI), 1527 to 1632 (SPFG…APVF), 1633 to 1742 (QQPH…VPTF), 1743 to 1849 (PRDY…DPVL), 1850 to 1957 (LNLP…HPLF), 1958 to 2067 (TEGT…WPTF), 2068 to 2172 (SPPA…RPEF), 2173 to 2291 (LNPI…TPQF), 2295 to 2400 (GITY…NPIF), 2401 to 2507 (DQLS…RPQF), 2508 to 2609 (SKPQ…RPVF), 2612 to 2720 (PPNG…EPLF), 2727 to 2844 (SPQY…PPRF), and 2845 to 2973 (TKAE…EEEF). Asn-155 and Asn-206 each carry an N-linked (GlcNAc...) asparagine glycan. N-linked (GlcNAc...) asparagine glycans are attached at residues Asn-349, Asn-391, Asn-432, Asn-464, Asn-470, Asn-600, Asn-692, Asn-763, Asn-808, Asn-825, Asn-939, Asn-999, Asn-1016, Asn-1169, Asn-1280, Asn-1313, Asn-1471, Asn-1532, Asn-1649, Asn-1665, Asn-1816, Asn-1855, Asn-1887, Asn-1900, Asn-2012, Asn-2048, Asn-2127, Asn-2166, Asn-2193, Asn-2261, Asn-2355, and Asn-2367. N-linked (GlcNAc...) asparagine glycans are attached at residues Asn-2576, Asn-2614, Asn-2747, Asn-2806, Asn-2875, Asn-2894, Asn-2939, and Asn-2979. The helical transmembrane segment at 3063-3083 (LQMAIIVLAILLFLAAMLFVL) threads the bilayer. At 3084 to 3317 (MNWYYRTIHK…MESPLEITEL (234 aa)) the chain is on the cytoplasmic side.

In terms of assembly, antiparallel heterodimer with PCDH15. Interacts with USH1C and USH1G.

Its subcellular location is the cell membrane. In terms of biological role, cadherins are calcium-dependent cell adhesion proteins. They preferentially interact with themselves in a homophilic manner in connecting cells. CDH23 is required for establishing and/or maintaining the proper organization of the stereocilia bundle of hair cells in the cochlea and the vestibule during late embryonic/early postnatal development. It is part of the functional network formed by USH1C, USH1G, CDH23 and MYO7A that mediates mechanotransduction in cochlear hair cells. Required for normal hearing. In Rattus norvegicus (Rat), this protein is Cadherin-23 (Cdh23).